The sequence spans 415 residues: MFDRAQSTIANVDPEIFAAIEQENRRQEDHIELIASENYTSPAVMAAQGSQLTNKYAEGYPGKRYYGGCEYVDVVEQLAIDRVKQLFGAEAANVQPNSGSQANQGVFFAMLKPGDTIMGMSLAHGGHLTHGSPVNMSGKWFNVVSYGLNENEDIDYEAAEQLAQEHKPKLIVAGASAFSLKIDFERLAKIAKSVGAYLMVDMAHYAGLIAAGVYPNPVPHADFVTTTTHKSLRGPRGGVILMKAEYEKPINSAIFPGIQGGPLMHVIAGKAVAFKEALSPEFKAYQEKVVENARVLAETLVKRGLRIVSGRTESHVMLVDLRAKHITGKAAEAALGAAHITVNKNAIPNDPEKPFVTSGVRLGSPAMTTRGFGPAEAEQVGNLIADVLDNPEDAATIERVRAQVAELTKRFPVYR.

Residues leucine 122 and 126–128 (GHL) each bind (6S)-5,6,7,8-tetrahydrofolate. N6-(pyridoxal phosphate)lysine is present on lysine 230.

This sequence belongs to the SHMT family. As to quaternary structure, homodimer. The cofactor is pyridoxal 5'-phosphate.

The protein localises to the cytoplasm. It catalyses the reaction (6R)-5,10-methylene-5,6,7,8-tetrahydrofolate + glycine + H2O = (6S)-5,6,7,8-tetrahydrofolate + L-serine. Its pathway is one-carbon metabolism; tetrahydrofolate interconversion. It functions in the pathway amino-acid biosynthesis; glycine biosynthesis; glycine from L-serine: step 1/1. In terms of biological role, catalyzes the reversible interconversion of serine and glycine with tetrahydrofolate (THF) serving as the one-carbon carrier. This reaction serves as the major source of one-carbon groups required for the biosynthesis of purines, thymidylate, methionine, and other important biomolecules. Also exhibits THF-independent aldolase activity toward beta-hydroxyamino acids, producing glycine and aldehydes, via a retro-aldol mechanism. The chain is Serine hydroxymethyltransferase 3 from Burkholderia lata (strain ATCC 17760 / DSM 23089 / LMG 22485 / NCIMB 9086 / R18194 / 383).